The primary structure comprises 36 residues: GLKEWAMKKMCPIAVRLAKKCDGTLATKIKEICDNL.

Cysteines 11 and 33 form a disulfide.

It belongs to the ectatomin family. Ectatomin-Et subfamily. In terms of assembly, heterodimer of subunits A and B; disulfide-linked. In terms of tissue distribution, expressed by the venom gland.

The protein localises to the secreted. The protein resides in the target cell membrane. In Ectatomma tuberculatum (Selva ant), this protein is U1-ectatotoxin-Et1b subunit B.